A 61-amino-acid chain; its full sequence is Small ribosomal subunit protein uS14 (61 aa).

Positions 24, 27, 40, and 43 each coordinate Zn(2+).

The protein belongs to the universal ribosomal protein uS14 family. Zinc-binding uS14 subfamily. In terms of assembly, part of the 30S ribosomal subunit. Contacts proteins S3 and S10. Zn(2+) is required as a cofactor.

In terms of biological role, binds 16S rRNA, required for the assembly of 30S particles and may also be responsible for determining the conformation of the 16S rRNA at the A site. This is Small ribosomal subunit protein uS14 from Borrelia garinii subsp. bavariensis (strain ATCC BAA-2496 / DSM 23469 / PBi) (Borreliella bavariensis).